Here is a 291-residue protein sequence, read N- to C-terminus: Ajmaline N-methyltransferase (291 aa).

The interval 71–80 is SAM motif I; sequence MLDVGCGIGG. Positions 133 to 139 match the Vacuolar targeting signal motif; sequence DGAFDLV. The segment at 134 to 142 is SAM motif II; that stretch reads GAFDLVLSI. An SAM motif III region spans residues 161–170; that stretch reads VAASGATIII.

The protein belongs to the class I-like SAM-binding methyltransferase superfamily. gTMT family. Homodimer. Mainly expressed in roots, but barely detectable in stems and flowers.

The protein localises to the vacuole membrane. It carries out the reaction ajmaline + S-adenosyl-L-methionine = 4-methylajmaline + S-adenosyl-L-homocysteine + H(+). The enzyme catalyses norajmaline + S-adenosyl-L-methionine = 4-methylnorajmaline + S-adenosyl-L-homocysteine + H(+). Its pathway is alkaloid biosynthesis; ajmaline biosynthesis. In terms of biological role, N-methyltransferase involved in the biosynthesis of ajmaline-type monoterpenoid indole alkaloids (MIAs) natural products, important plant-derived pharmaceuticals used in the therapy of heart disorders. Catalyzes the indole N-methylation of ajmaline to produce 4-methylajmaline. Also able, with a lower efficiency, to mediates the conversion of norajmaline to 4-methylnorajmaline. In Rauvolfia serpentina (Serpentine wood), this protein is Ajmaline N-methyltransferase.